The following is a 378-amino-acid chain: Protein RecA (378 aa).

79 to 86 lines the ATP pocket; that stretch reads GPESSGKT.

The protein belongs to the RecA family.

Its subcellular location is the cytoplasm. Functionally, can catalyze the hydrolysis of ATP in the presence of single-stranded DNA, the ATP-dependent uptake of single-stranded DNA by duplex DNA, and the ATP-dependent hybridization of homologous single-stranded DNAs. It interacts with LexA causing its activation and leading to its autocatalytic cleavage. The chain is Protein RecA from Streptococcus pyogenes serotype M2 (strain MGAS10270).